A 463-amino-acid polypeptide reads, in one-letter code: Ribosomal protein uS12 methylthiotransferase RimO (463 aa).

One can recognise an MTTase N-terminal domain in the interval 15–130 (PKVGMVSLGC…VMQAVHSHLP (116 aa)). Residues Cys24, Cys60, Cys89, Cys161, Cys165, and Cys168 each coordinate [4Fe-4S] cluster. Positions 147 to 392 (LTPRHYAYLK…MEVAEEVSAA (246 aa)) constitute a Radical SAM core domain. In terms of domain architecture, TRAM spans 395–463 (ARKIGKTLKV…ADGHDLWGEV (69 aa)).

The protein belongs to the methylthiotransferase family. RimO subfamily. Requires [4Fe-4S] cluster as cofactor.

The protein localises to the cytoplasm. The catalysed reaction is L-aspartate(89)-[ribosomal protein uS12]-hydrogen + (sulfur carrier)-SH + AH2 + 2 S-adenosyl-L-methionine = 3-methylsulfanyl-L-aspartate(89)-[ribosomal protein uS12]-hydrogen + (sulfur carrier)-H + 5'-deoxyadenosine + L-methionine + A + S-adenosyl-L-homocysteine + 2 H(+). In terms of biological role, catalyzes the methylthiolation of an aspartic acid residue of ribosomal protein uS12. This is Ribosomal protein uS12 methylthiotransferase RimO from Burkholderia mallei (strain NCTC 10229).